The primary structure comprises 1000 residues: C-module-binding factor A (1000 aa).

Residues 113–280 (PREWQEYLSH…ISYFSSLPHT (168 aa)) enclose the JmjC domain. The PHD-type; atypical zinc finger occupies 489–544 (KIKCHRCEKRFKKFSIIFCTNCNARFCEQCVVNTFGQNFQVLMKRNEWECFCCKGL). The RING-type; degenerate zinc finger occupies 492-542 (CHRCEKRFKKFSIIFCTNCNARFCEQCVVNTFGQNFQVLMKRNEWECFCCK). Disordered stretches follow at residues 561 to 647 (RILN…SSYS) and 660 to 818 (SYGS…KNLK). Low complexity-rich tracts occupy residues 574-647 (NNNN…SSYS), 660-683 (SYGS…NNNN), 700-710 (SSSSGSGSSNS), 732-751 (NNNN…NNHH), and 760-789 (NNNN…STST). Residues 805-818 (DNDKPKGRPPKNLK) show a composition bias toward basic and acidic residues. Residues 810–818 (KGRPPKNLK) constitute a DNA-binding region (a.T hook).

Monomer.

It localises to the nucleus. In terms of biological role, transcriptional regulator involved in phagocytosis and pinocytosis. Both activates and represses transcription. Regulates expression of acaA, carA, pkaC, csaA, cotB and lagC. Promotes amplification of the tRNA gene-associated retrotransposon TRE5-A, a mobile genetic element formerly called as Dictyostelium repetitive element (DRE). Suppresses agnC and agnE encoding argonaute proteins which are part of a RNA interference pathway controlling TRE5-A amplification. Required for amplification of both sense and antisense RNA transcripts, but does not activate their promoters found in A-module and C-module of the TRE5-A, respectively. Nevertheless, binds to distinct DNA sequences containing A and T stretches within the C-module in vitro. This chain is C-module-binding factor A, found in Dictyostelium discoideum (Social amoeba).